The following is a 362-amino-acid chain: E3 ubiquitin-protein ligase TM129 (362 aa).

The Lumenal portion of the chain corresponds to M1–V6. The helical transmembrane segment at T7–Y27 threads the bilayer. The Cytoplasmic segment spans residues S28–T56. A helical transmembrane segment spans residues S57–A77. Residues A78–Q94 are Lumenal-facing. The helical transmembrane segment at L95–S115 threads the bilayer. The Cytoplasmic portion of the chain corresponds to W116–R362. The RING-type; degenerate zinc-finger motif lies at C285 to R350.

Belongs to the TMEM129 family. As to quaternary structure, integral component of ER-resident dislocation complexes.

It is found in the endoplasmic reticulum membrane. It carries out the reaction S-ubiquitinyl-[E2 ubiquitin-conjugating enzyme]-L-cysteine + [acceptor protein]-L-lysine = [E2 ubiquitin-conjugating enzyme]-L-cysteine + N(6)-ubiquitinyl-[acceptor protein]-L-lysine.. Its pathway is protein modification; protein ubiquitination. In terms of biological role, E3 ubiquitin-protein ligase involved in ER-associated protein degradation, preferentially associates with the E2 enzyme UBE2J2. Exploited by viral US11 proteins to mediate HLA class I proteins degradation. The sequence is that of E3 ubiquitin-protein ligase TM129 (Tmem129) from Mus musculus (Mouse).